The chain runs to 450 residues: Phosphoglucosamine mutase (450 aa).

The active-site Phosphoserine intermediate is the S103. Mg(2+) is bound by residues S103, D243, D245, and D247. A Phosphoserine modification is found at S103.

The protein belongs to the phosphohexose mutase family. Mg(2+) serves as cofactor. Post-translationally, activated by phosphorylation.

The catalysed reaction is alpha-D-glucosamine 1-phosphate = D-glucosamine 6-phosphate. Its function is as follows. Catalyzes the conversion of glucosamine-6-phosphate to glucosamine-1-phosphate. The polypeptide is Phosphoglucosamine mutase (Latilactobacillus sakei subsp. sakei (strain 23K) (Lactobacillus sakei subsp. sakei)).